The chain runs to 405 residues: Transcriptional regulatory protein DEP1 (405 aa).

Residues 1 to 12 (MSQQTPQESEQT) show a composition bias toward low complexity. Disordered regions lie at residues 1 to 26 (MSQQ…SVLS) and 49 to 171 (AGTE…VMPS). Phosphoserine is present on S56. Composition is skewed to basic and acidic residues over residues 86–108 (SLKR…KVPG) and 116–139 (EEEK…ARDE). At S120 the chain carries Phosphoserine. Residues 140-157 (QGDEGDNEEENNEEDNEN) are compositionally biased toward acidic residues. Position 370 is a phosphoserine (S370).

Component of the RPD3C(L) complex composed of at least ASH1, CTI6, DEP1, PHO23, RPD3, RXT2, RXT3, SAP30, SDS3, SIN3, UME1 and UME6.

Its subcellular location is the cytoplasm. It is found in the nucleus. Component of the RPD3C(L) histone deacetylase complex (HDAC) responsible for the deacetylation of lysine residues on the N-terminal part of the core histones (H2A, H2B, H3 and H4). Histone deacetylation gives a tag for epigenetic repression and plays an important role in transcriptional regulation, cell cycle progression and developmental events. This is Transcriptional regulatory protein DEP1 (DEP1) from Saccharomyces cerevisiae (strain ATCC 204508 / S288c) (Baker's yeast).